The sequence spans 146 residues: Hemoglobin subunit beta-1 (146 aa).

Residues 2 to 146 (KWSDKERAVI…VVSALGKQYC (145 aa)) form the Globin domain. Heme b contacts are provided by His63 and His92.

It belongs to the globin family. As to quaternary structure, hb1 is a heterotetramer of two alpha-1 chains and two beta-1 chains; Hb2 is a heterotetramer of two alpha-2 chains and two beta-1 chains. In terms of tissue distribution, red blood cells.

Functionally, involved in oxygen transport from gills to the various peripheral tissues. The chain is Hemoglobin subunit beta-1 (hbb1) from Anarhichas minor (Arctic spotted wolffish).